The sequence spans 87 residues: DNA-directed RNA polymerase subunit omega (87 aa).

This sequence belongs to the RNA polymerase subunit omega family. In terms of assembly, the RNAP catalytic core consists of 2 alpha, 1 beta, 1 beta' and 1 omega subunit. When a sigma factor is associated with the core the holoenzyme is formed, which can initiate transcription.

It catalyses the reaction RNA(n) + a ribonucleoside 5'-triphosphate = RNA(n+1) + diphosphate. Its function is as follows. Promotes RNA polymerase assembly. Latches the N- and C-terminal regions of the beta' subunit thereby facilitating its interaction with the beta and alpha subunits. This Alcanivorax borkumensis (strain ATCC 700651 / DSM 11573 / NCIMB 13689 / SK2) protein is DNA-directed RNA polymerase subunit omega.